The chain runs to 250 residues: uncharacterized protein (250 aa).

The signal sequence occupies residues 1 to 17; the sequence is MRTLVLLSSVAILSTLA. N-linked (GlcNAc...) asparagine glycosylation is found at asparagine 48, asparagine 159, asparagine 223, and asparagine 239.

Its subcellular location is the secreted. This is an uncharacterized protein from Caenorhabditis elegans.